Here is a 430-residue protein sequence, read N- to C-terminus: ATP-dependent RNA helicase RhlB (430 aa).

The Q motif motif lies at 9–37 (QKFSDFALHPQVIEALESKGFHNCTPIQA). Residues 40–219 (LPLALSGRDV…FEQMNNAEYV (180 aa)) form the Helicase ATP-binding domain. 53 to 60 (AQTGTGKT) serves as a coordination point for ATP. Positions 165–168 (DEAD) match the DEAD box motif. The Helicase C-terminal domain maps to 245–390 (RLLQTLLEEE…VSKYNSDALM (146 aa)). The segment at 392–430 (DLPAPKRLTRPPRSNNGPRRHNNAPRRSGAPRNNRKRAD) is disordered.

Belongs to the DEAD box helicase family. RhlB subfamily. Component of the RNA degradosome, which is a multiprotein complex involved in RNA processing and mRNA degradation.

Its subcellular location is the cytoplasm. It catalyses the reaction ATP + H2O = ADP + phosphate + H(+). Functionally, DEAD-box RNA helicase involved in RNA degradation. Has RNA-dependent ATPase activity and unwinds double-stranded RNA. This is ATP-dependent RNA helicase RhlB from Pectobacterium carotovorum subsp. carotovorum (strain PC1).